The chain runs to 557 residues: Dihydroxy-acid dehydratase (557 aa).

Cys50 serves as a coordination point for [2Fe-2S] cluster. A Mg(2+)-binding site is contributed by Asp82. Cys123 lines the [2Fe-2S] cluster pocket. 2 residues coordinate Mg(2+): Asp124 and Lys125. N6-carboxylysine is present on Lys125. Cys195 lines the [2Fe-2S] cluster pocket. Glu447 provides a ligand contact to Mg(2+). Ser473 functions as the Proton acceptor in the catalytic mechanism.

Belongs to the IlvD/Edd family. Homodimer. The cofactor is [2Fe-2S] cluster. Mg(2+) serves as cofactor.

It carries out the reaction (2R)-2,3-dihydroxy-3-methylbutanoate = 3-methyl-2-oxobutanoate + H2O. It catalyses the reaction (2R,3R)-2,3-dihydroxy-3-methylpentanoate = (S)-3-methyl-2-oxopentanoate + H2O. Its pathway is amino-acid biosynthesis; L-isoleucine biosynthesis; L-isoleucine from 2-oxobutanoate: step 3/4. The protein operates within amino-acid biosynthesis; L-valine biosynthesis; L-valine from pyruvate: step 3/4. Functionally, functions in the biosynthesis of branched-chain amino acids. Catalyzes the dehydration of (2R,3R)-2,3-dihydroxy-3-methylpentanoate (2,3-dihydroxy-3-methylvalerate) into 2-oxo-3-methylpentanoate (2-oxo-3-methylvalerate) and of (2R)-2,3-dihydroxy-3-methylbutanoate (2,3-dihydroxyisovalerate) into 2-oxo-3-methylbutanoate (2-oxoisovalerate), the penultimate precursor to L-isoleucine and L-valine, respectively. The protein is Dihydroxy-acid dehydratase of Burkholderia thailandensis (strain ATCC 700388 / DSM 13276 / CCUG 48851 / CIP 106301 / E264).